Reading from the N-terminus, the 145-residue chain is Protein BUD31 homolog 3 (145 aa).

Belongs to the BUD31 (G10) family.

The protein localises to the nucleus. This is Protein BUD31 homolog 3 from Oryza sativa subsp. japonica (Rice).